We begin with the raw amino-acid sequence, 500 residues long: NAD(P)H-quinone oxidoreductase chain 4, chloroplastic (500 aa).

Helical transmembrane passes span 4–24, 35–55, 87–107, 113–130, 134–154, 167–187, 211–231, 242–262, 272–292, 305–325, 330–350, 386–406, 416–436, and 462–482; these read FPWL…MLFL, YTIC…CYNF, IGTI…AFPV, LFHF…GSFS, LLLF…LLSM, FILY…GISL, IILY…IPLH, HYST…YGLV, AHSL…IYAA, IAYS…SITD, GAIL…FLAG, LALP…GIIT, IFII…LLSM, and LFLS…PDFV.

The protein belongs to the complex I subunit 4 family.

The protein resides in the plastid. Its subcellular location is the chloroplast thylakoid membrane. It carries out the reaction a plastoquinone + NADH + (n+1) H(+)(in) = a plastoquinol + NAD(+) + n H(+)(out). The catalysed reaction is a plastoquinone + NADPH + (n+1) H(+)(in) = a plastoquinol + NADP(+) + n H(+)(out). The sequence is that of NAD(P)H-quinone oxidoreductase chain 4, chloroplastic from Aethionema cordifolium (Lebanon stonecress).